A 77-amino-acid polypeptide reads, in one-letter code: Acyl carrier protein (77 aa).

The region spanning 1 to 76 (MAIFDDVKKV…DVVNYIENLQ (76 aa)) is the Carrier domain. An O-(pantetheine 4'-phosphoryl)serine modification is found at S36.

It belongs to the acyl carrier protein (ACP) family. 4'-phosphopantetheine is transferred from CoA to a specific serine of apo-ACP by AcpS. This modification is essential for activity because fatty acids are bound in thioester linkage to the sulfhydryl of the prosthetic group.

The protein resides in the cytoplasm. It functions in the pathway lipid metabolism; fatty acid biosynthesis. Functionally, carrier of the growing fatty acid chain in fatty acid biosynthesis. The polypeptide is Acyl carrier protein (Campylobacter lari (strain RM2100 / D67 / ATCC BAA-1060)).